Consider the following 267-residue polypeptide: MAEEMRQELSALAAIFCGPHEWEMLSCSETDGAVFRIHTTAEGLAGEDVPLELAFHLPAGYPSCLPGISVNSERLTRAQCVTVKEKLLGEARRLLSEPMVHELVLWTQQNLRHILSQTETESSNGTCTLPESSTVDGGLWMTLLRLDHMRARTKYVKVVEKWASELRLTGRLMFMGKMILILLQGDRSNIKEYLILQKTSKVDVDSSGKKCKEKMISVLSETKVQTEHKRFLAFEVKEYSTLEELQKEFETAGLQELFSECVLGLVK.

The RWD domain occupies glutamine 7–isoleucine 114. 2 interaction with UBE2I/UBC9 regions span residues alanine 13–isoleucine 15 and valine 100–glutamate 102.

Interacts with UBE2I/UBC9, NFKBIA, HIF1A and NCOA2.

It localises to the nucleus. Its subcellular location is the cytoplasm. Enhancer of SUMO conjugation. Via its interaction with UBE2I/UBC9, increases SUMO conjugation to proteins by promoting the binding of E1 and E2 enzymes, thioester linkage between SUMO and UBE2I/UBC9 and transfer of SUMO to specific target proteins which include HIF1A, PIAS, NFKBIA, NR3C1 and TOP1. Positively regulates the NF-kappa-B signaling pathway by enhancing the sumoylation of NF-kappa-B inhibitor alpha (NFKBIA), promoting its stabilization which consequently leads to an increased inhibition of NF-kappa-B transcriptional activity. Negatively regulates the hypoxia-inducible factor-1 alpha (HIF1A) signaling pathway by increasing the sumoylation of HIF1A, promoting its stabilization, transcriptional activity and the expression of its target gene VEGFA during hypoxia. Has no effect on ubiquitination. This is RWD domain-containing protein 3 (Rwdd3) from Rattus norvegicus (Rat).